Consider the following 435-residue polypeptide: Eukaryotic translation initiation factor 3 subunit E (435 aa).

The region spanning 219–392 (FFNHPKGRDL…GHVVMGTQPL (174 aa)) is the PCI domain.

This sequence belongs to the eIF-3 subunit E family. Component of the eukaryotic translation initiation factor 3 (eIF-3) complex. The eIF-3 complex interacts with pix. Interacts with mxt. In terms of tissue distribution, expression levels in females and males are relatively similar 10 days after oviposition, however by day 15 expression is higher in gravid females than in males (at protein level).

The protein resides in the cytoplasm. It is found in the microsome. It localises to the endoplasmic reticulum. Its function is as follows. Component of the eukaryotic translation initiation factor 3 (eIF-3) complex, which is involved in protein synthesis of a specialized repertoire of mRNAs and, together with other initiation factors, stimulates binding of mRNA and methionyl-tRNAi to the 40S ribosome. The eIF-3 complex specifically targets and initiates translation of a subset of mRNAs involved in cell proliferation. In addition to its role in the eIF-3 complex, also functions in protein ubiquitination and degradation. During mitosis required for regulating mitotic microtubule growth and kinetochore formation, and consequently is required for satisfying the spindle assembly checkpoint (SAC) during metaphase to prevent delays in mitotic progression. This is likely by promoting the ubiquitination and degradation of Klp67A, a kinesin-like protein that suppresses microtubule polymerization at plus ends. Acts in the COP9 signalosome (CSN) mediated regulation of cullin neddylation by promoting Cul1 and Cul3 neddylation and negatively regulating the CSN complex subunit CSN5. In Drosophila melanogaster (Fruit fly), this protein is Eukaryotic translation initiation factor 3 subunit E.